A 169-amino-acid chain; its full sequence is Transcription antitermination protein NusB (169 aa).

The span at 1–19 (MAEMKKTIDNKPAPKGEKK) shows a compositional bias: basic and acidic residues. The tract at residues 1 to 22 (MAEMKKTIDNKPAPKGEKKANR) is disordered.

The protein belongs to the NusB family.

In terms of biological role, involved in transcription antitermination. Required for transcription of ribosomal RNA (rRNA) genes. Binds specifically to the boxA antiterminator sequence of the ribosomal RNA (rrn) operons. The chain is Transcription antitermination protein NusB from Rhodopseudomonas palustris (strain BisB18).